The chain runs to 63 residues: Large ribosomal subunit protein uL29 (63 aa).

Belongs to the universal ribosomal protein uL29 family.

The polypeptide is Large ribosomal subunit protein uL29 (Pseudoalteromonas atlantica (strain T6c / ATCC BAA-1087)).